Consider the following 391-residue polypeptide: MNNTRVSFRSTKSLLAAIIATSMMTWSVNRATLQTTKATEAASTGWATQGGTTGGAKAASAKIYAVKNISEFKAALNGTDTDPKIIQVTGAIDISGGKAYTSFDDQKARSQISVPSNTTIIGIGSNGKFTNGSLVIKGVSNVILRNLYIETPVDVAPHYEEGDGWNAEWDAAVIDNSTRVWVDHVTISDGSFTDDKYTTKNGEKYVQHDGALDIKKGSDYVTISSSRFELHDKTILIGHSDSNGSQDSGKLRVTFHNNVFDRVTERTPRVRFGSIHAYNNVYLGDVKNSVYPYLYSFGLGTSGTILSESNSFTLSNLKSIDGKNPECSIVKQFNSKVFSDNGSLVNGSSTTKLDTCAVTAYKPTLPYKYSAQTMTSSLASSINSNAGYGKL.

The first 31 residues, 1 to 31, serve as a signal peptide directing secretion; sequence MNNTRVSFRSTKSLLAAIIATSMMTWSVNRA. Ca(2+)-binding residues include Asp-170 and Asp-213. Residue Arg-266 is part of the active site.

The protein belongs to the polysaccharide lyase 1 family. PLBC subfamily. Ca(2+) is required as a cofactor.

The protein localises to the secreted. It carries out the reaction Eliminative cleavage of (1-&gt;4)-alpha-D-galacturonan to give oligosaccharides with 4-deoxy-alpha-D-galact-4-enuronosyl groups at their non-reducing ends.. The protein operates within glycan metabolism; pectin degradation; 2-dehydro-3-deoxy-D-gluconate from pectin: step 2/5. In terms of biological role, involved in maceration and soft-rotting of plant tissue. The sequence is that of Pectate lyase D (pelD) from Dickeya chrysanthemi (Pectobacterium chrysanthemi).